A 90-amino-acid polypeptide reads, in one-letter code: DNA-binding protein HU (90 aa).

It belongs to the bacterial histone-like protein family. Homodimer.

Histone-like DNA-binding protein which is capable of wrapping DNA to stabilize it, and thus to prevent its denaturation under extreme environmental conditions. The protein is DNA-binding protein HU (hup) of Staphylococcus aureus (strain COL).